We begin with the raw amino-acid sequence, 308 residues long: tRNA dimethylallyltransferase (308 aa).

14 to 21 (GPTASGKT) is a binding site for ATP. Position 16–21 (16–21 (TASGKT)) interacts with substrate. Interaction with substrate tRNA stretches follow at residues 39 to 42 (DSAL), 163 to 167 (QRLSR), and 244 to 249 (RCVGYR).

The protein belongs to the IPP transferase family. In terms of assembly, monomer. It depends on Mg(2+) as a cofactor.

It catalyses the reaction adenosine(37) in tRNA + dimethylallyl diphosphate = N(6)-dimethylallyladenosine(37) in tRNA + diphosphate. Catalyzes the transfer of a dimethylallyl group onto the adenine at position 37 in tRNAs that read codons beginning with uridine, leading to the formation of N6-(dimethylallyl)adenosine (i(6)A). The polypeptide is tRNA dimethylallyltransferase (Shewanella oneidensis (strain ATCC 700550 / JCM 31522 / CIP 106686 / LMG 19005 / NCIMB 14063 / MR-1)).